Reading from the N-terminus, the 219-residue chain is MASPTLTLLLLLTTVSFFISSSADPDMLQDLCVADLPSGIKINGFPCKDAATVTSADFFSQGLAKPGLTNNTFGALVTGANVMTIPGLNTLGVSLSRIDYAPGGLNPPHTHPRATEVVFVLEGTLDVGFLTTANKLISQSLKKGDVFAFPKGLVHFQKNNGDVPASVIAAFNSQLPGTQSLGATLFGSTPPVPDNILAQAFQTSPGTVKHIKSKFQPKK.

An N-terminal signal peptide occupies residues Met1–Ser21. A disulfide bond links Cys32 and Cys47. The Cupin type-1 domain occupies Gln61–Lys209. The N-linked (GlcNAc...) asparagine glycan is linked to Asn70. Positions 109, 111, 116, and 155 each coordinate Mn(2+).

This sequence belongs to the germin family. As to quaternary structure, oligomer (believed to be a pentamer but probably hexamer).

It is found in the secreted. The protein resides in the extracellular space. Its subcellular location is the apoplast. Functionally, may play a role in plant defense. Probably has no oxalate oxidase activity even if the active site is conserved. The chain is Germin-like protein subfamily 2 member 1 (GLP4) from Arabidopsis thaliana (Mouse-ear cress).